A 467-amino-acid polypeptide reads, in one-letter code: Pup--protein ligase (467 aa).

Glu-12 is a Mg(2+) binding site. An ATP-binding site is contributed by Arg-56. Residue Tyr-58 coordinates Mg(2+). The active-site Proton acceptor is Asp-60. Residue Glu-66 participates in Mg(2+) binding. ATP-binding residues include Thr-69 and Trp-431.

It belongs to the Pup ligase/Pup deamidase family. Pup-conjugating enzyme subfamily.

The enzyme catalyses ATP + [prokaryotic ubiquitin-like protein]-L-glutamate + [protein]-L-lysine = ADP + phosphate + N(6)-([prokaryotic ubiquitin-like protein]-gamma-L-glutamyl)-[protein]-L-lysine.. It functions in the pathway protein degradation; proteasomal Pup-dependent pathway. It participates in protein modification; protein pupylation. In terms of biological role, catalyzes the covalent attachment of the prokaryotic ubiquitin-like protein modifier Pup to the proteasomal substrate proteins, thereby targeting them for proteasomal degradation. This tagging system is termed pupylation. The ligation reaction involves the side-chain carboxylate of the C-terminal glutamate of Pup and the side-chain amino group of a substrate lysine. In Corynebacterium jeikeium (strain K411), this protein is Pup--protein ligase.